The following is a 200-amino-acid chain: NADH-quinone oxidoreductase subunit B (200 aa).

[4Fe-4S] cluster is bound by residues C79, C80, C144, and C174.

This sequence belongs to the complex I 20 kDa subunit family. As to quaternary structure, NDH-1 is composed of 14 different subunits. Subunits NuoB, C, D, E, F, and G constitute the peripheral sector of the complex. Requires [4Fe-4S] cluster as cofactor.

It localises to the cell inner membrane. It carries out the reaction a quinone + NADH + 5 H(+)(in) = a quinol + NAD(+) + 4 H(+)(out). NDH-1 shuttles electrons from NADH, via FMN and iron-sulfur (Fe-S) centers, to quinones in the respiratory chain. The immediate electron acceptor for the enzyme in this species is believed to be ubiquinone. Couples the redox reaction to proton translocation (for every two electrons transferred, four hydrogen ions are translocated across the cytoplasmic membrane), and thus conserves the redox energy in a proton gradient. This Caulobacter vibrioides (strain NA1000 / CB15N) (Caulobacter crescentus) protein is NADH-quinone oxidoreductase subunit B.